Reading from the N-terminus, the 276-residue chain is Large ribosomal subunit protein uL2 (276 aa).

2 disordered regions span residues 30–52 (VKGL…TTSR) and 224–257 (VMNP…KGYK). Residues 41–52 (GGRNNHGRTTSR) are compositionally biased toward polar residues.

It belongs to the universal ribosomal protein uL2 family. As to quaternary structure, part of the 50S ribosomal subunit. Forms a bridge to the 30S subunit in the 70S ribosome.

Its function is as follows. One of the primary rRNA binding proteins. Required for association of the 30S and 50S subunits to form the 70S ribosome, for tRNA binding and peptide bond formation. It has been suggested to have peptidyltransferase activity; this is somewhat controversial. Makes several contacts with the 16S rRNA in the 70S ribosome. This chain is Large ribosomal subunit protein uL2, found in Gluconacetobacter diazotrophicus (strain ATCC 49037 / DSM 5601 / CCUG 37298 / CIP 103539 / LMG 7603 / PAl5).